Reading from the N-terminus, the 114-residue chain is C-X-C motif chemokine 6 (114 aa).

The first 37 residues, Met-1–Ala-37, serve as a signal peptide directing secretion. Disulfide bonds link Cys-49/Cys-75 and Cys-51/Cys-91.

Belongs to the intercrine alpha (chemokine CxC) family.

The protein resides in the secreted. In terms of biological role, chemotactic for neutrophil granulocytes. Signals through binding and activation of its receptors (CXCR1 and CXCR2). In addition to its chemotactic and angiogenic properties, it has strong antibacterial activity against Gram-positive and Gram-negative bacteria (90-fold-higher when compared to CXCL5 and CXCL7). In Homo sapiens (Human), this protein is C-X-C motif chemokine 6 (CXCL6).